A 248-amino-acid polypeptide reads, in one-letter code: Ras-related protein RSR1 (248 aa).

Position 10 to 17 (10 to 17 (GAGGVGKS)) interacts with GTP. The Effector region signature appears at 32–40 (YDPTIEDSY). Residues 57–61 (DTAGV) and 116–119 (NKCD) contribute to the GTP site. Positions 182–248 (LQKQQQQQQQ…SSGSKFCTII (67 aa)) are disordered. Low complexity predominate over residues 184-214 (KQQQQQQQEQDAEGQQQQQKSGKSKSSATQK). Polar residues-rich tracts occupy residues 219–231 (DGQT…LKQS) and 238–248 (SSSGSKFCTII). Residue Cys245 is modified to Cysteine methyl ester. A lipid anchor (S-geranylgeranyl cysteine) is attached at Cys245. The propeptide at 246-248 (TII) is removed in mature form.

The protein belongs to the small GTPase superfamily. Ras family.

The protein resides in the cell membrane. It carries out the reaction GTP + H2O = GDP + phosphate + H(+). Alternates between an inactive form bound to GDP and an active form bound to GTP. Activated by a guanine nucleotide-exchange factor (GEF) and inactivated by a GTPase-activating protein (GAP). Ras-related protein which binds GDP/GTP and possesses intrinsic GTPase activity. Involved in both yeast and hypha development. In the yeast phase, it is required for normal (polar) bud site selection and is involved in cell morphogenesis; in the yeast-mycelial transition it is involved in germ tube emergence; and in the development of the hyphae it is involved in cell elongation. In Candida albicans (Yeast), this protein is Ras-related protein RSR1 (RSR1).